The primary structure comprises 204 residues: Putative F-box protein L168 (204 aa).

Positions 1 to 46 constitute an F-box domain; that stretch reads MNLCDLFDEIIIGIIDELSDRDKIKFMTTCSRFYYFIDKTKYFDIY. The tract at residues 161 to 184 is disordered; that stretch reads NETNKITNNHTNKKINNNKKHQNN. Basic residues predominate over residues 171–183; sequence TNKKINNNKKHQN.

The protein is Putative F-box protein L168 of Acanthamoeba polyphaga (Amoeba).